We begin with the raw amino-acid sequence, 220 residues long: UPF0643 protein PB2B2.08 (220 aa).

The protein belongs to the UPF0643 family.

It localises to the cytoplasm. The protein localises to the nucleus. The protein is UPF0643 protein PB2B2.08 of Schizosaccharomyces pombe (strain 972 / ATCC 24843) (Fission yeast).